A 688-amino-acid chain; its full sequence is Sodium channel and clathrin linker 1 (688 aa).

Residue A2 is modified to N-acetylalanine. Coiled coils occupy residues L59–K108 and Q152–T673. The residue at position 681 (S681) is a Phosphoserine.

In terms of assembly, interacts with SCN10A and clathrin. Identified in a complex containing SCN10A, clathrin and SCLT1.

It is found in the cytoplasm. The protein resides in the cytoskeleton. Its subcellular location is the microtubule organizing center. The protein localises to the centrosome. It localises to the centriole. Its function is as follows. Adapter protein that links SCN10A to clathrin. Regulates SCN10A channel activity, possibly by promoting channel internalization. The sequence is that of Sodium channel and clathrin linker 1 (Sclt1) from Mus musculus (Mouse).